A 277-amino-acid chain; its full sequence is Caspase-3 (277 aa).

N-acetylmethionine is present on Met-1. Propeptides lie at residues 1 to 9 (MENNETSVD) and 10 to 28 (AKSIKNLETQTIHGSKSMD). Lys-11 is modified (N6-acetyllysine). Position 26 is a phosphoserine (Ser-26). Catalysis depends on residues His-121 and Cys-163. Cys-163 is subject to S-nitrosocysteine; in inhibited form.

The protein belongs to the peptidase C14A family. As to quaternary structure, heterotetramer that consists of two anti-parallel arranged heterodimers, each one formed by a 17 kDa (p17) and a 12 kDa (p12) subunit. Interacts with BIRC6/bruce. In terms of processing, cleavage by granzyme B, caspase-6, caspase-8 and caspase-10 generates the two active subunits. Additional processing of the propeptides is likely due to the autocatalytic activity of the activated protease. Active heterodimers between the small subunit of caspase-7 protease and the large subunit of caspase-3 also occur and vice versa. Post-translationally, S-nitrosylated on its catalytic site cysteine in unstimulated cell lines and denitrosylated upon activation of the Fas apoptotic pathway, associated with an increase in intracellular caspase activity. Fas therefore activates caspase-3 not only by inducing the cleavage of the caspase zymogen to its active subunits, but also by stimulating the denitrosylation of its active site thiol. Ubiquitinated by BIRC6; this activity is inhibited by DIABLO/SMAC.

The protein localises to the cytoplasm. It carries out the reaction Strict requirement for an Asp residue at positions P1 and P4. It has a preferred cleavage sequence of Asp-Xaa-Xaa-Asp-|- with a hydrophobic amino-acid residue at P2 and a hydrophilic amino-acid residue at P3, although Val or Ala are also accepted at this position.. Its activity is regulated as follows. Inhibited by BIRC6; following inhibition of BIRC6-caspase binding by DIABLO/SMAC, BIRC6 is subjected to caspase cleavage, leading to an increase in active caspases. Involved in the activation cascade of caspases responsible for apoptosis execution. At the onset of apoptosis, it proteolytically cleaves poly(ADP-ribose) polymerase PARP1 at a '216-Asp-|-Gly-217' bond. Cleaves and activates sterol regulatory element binding proteins (SREBPs) between the basic helix-loop-helix leucine zipper domain and the membrane attachment domain. Cleaves and activates caspase-6, -7 and -9 (CASP6, CASP7 and CASP9, respectively). Cleaves and inactivates interleukin-18 (IL18). Triggers cell adhesion in sympathetic neurons through RET cleavage. Cleaves IL-1 beta between an Asp and an Ala, releasing the mature cytokine which is involved in a variety of inflammatory processes. Cleaves and inhibits serine/threonine-protein kinase AKT1 in response to oxidative stress. Acts as an inhibitor of type I interferon production during virus-induced apoptosis by mediating cleavage of antiviral proteins CGAS, IRF3 and MAVS, thereby preventing cytokine overproduction. Also involved in pyroptosis by mediating cleavage and activation of gasdermin-E (GSDME). Cleaves XRCC4 and phospholipid scramblase proteins XKR4, XKR8 and XKR9, leading to promote phosphatidylserine exposure on apoptotic cell surface. Cleaves BIRC6 following inhibition of BIRC6-caspase binding by DIABLO/SMAC. This chain is Caspase-3 (CASP3), found in Oryctolagus cuniculus (Rabbit).